Consider the following 374-residue polypeptide: Probable neutral protease 2 homolog ARB_00849 (374 aa).

An N-terminal signal peptide occupies residues 1–19 (MKFLTALSAIGALVATATA). The propeptide occupies 20-189 (AAVPNTPAKQ…KKSRGTIDKR (170 aa)). 2 disulfides stabilise this stretch: Cys-197-Cys-268 and Cys-275-Cys-293. Zn(2+) is bound at residue His-318. Glu-319 is a catalytic residue. The Zn(2+) site is built by His-322 and Asp-333.

It belongs to the peptidase M35 family. Zn(2+) serves as cofactor.

The protein resides in the secreted. The enzyme catalyses Preferential cleavage of bonds with hydrophobic residues in P1'. Also 3-Asn-|-Gln-4 and 8-Gly-|-Ser-9 bonds in insulin B chain.. In terms of biological role, probable secreted metalloprotease that shows high activities on basic nuclear substrates such as histone and protamine. May be involved in virulence. The chain is Probable neutral protease 2 homolog ARB_00849 from Arthroderma benhamiae (strain ATCC MYA-4681 / CBS 112371) (Trichophyton mentagrophytes).